A 627-amino-acid polypeptide reads, in one-letter code: Putative ankyrin repeat protein L122 (627 aa).

12 ANK repeats span residues 61–94 (KGWT…DVHI), 98–130 (KGRT…DINS), 153–186 (HACY…DPNI), 190–223 (YGKT…NANH), 228–259 (AETV…DINH), 263–296 (IGFT…NINL), 300–333 (DGFT…DIND), 337–370 (NNVT…DLEI), 374–407 (YDWT…NVNV), 411–444 (LGHT…NPNL), 448–480 (DKNT…DSNT), and 491–523 (REYN…NYSD).

In Acanthamoeba polyphaga (Amoeba), this protein is Putative ankyrin repeat protein L122.